Consider the following 88-residue polypeptide: UPF0237 protein spr0217 (88 aa).

An ACT domain is found at 4–77; sequence IITVVGKDKS…QTLNVKINIQ (74 aa).

This sequence belongs to the UPF0237 family. As to quaternary structure, homodimer.

The protein is UPF0237 protein spr0217 of Streptococcus pneumoniae (strain ATCC BAA-255 / R6).